We begin with the raw amino-acid sequence, 247 residues long: 2,3-bisphosphoglycerate-dependent phosphoglycerate mutase (247 aa).

Residues 8-15, 21-22, R60, 87-90, K98, 114-115, and 183-184 each bind substrate; these read RHGESQWN, TG, ERHY, RR, and GN. The Tele-phosphohistidine intermediate role is filled by H9. Residue E87 is the Proton donor/acceptor of the active site.

Belongs to the phosphoglycerate mutase family. BPG-dependent PGAM subfamily.

It carries out the reaction (2R)-2-phosphoglycerate = (2R)-3-phosphoglycerate. It functions in the pathway carbohydrate degradation; glycolysis; pyruvate from D-glyceraldehyde 3-phosphate: step 3/5. Its function is as follows. Catalyzes the interconversion of 2-phosphoglycerate and 3-phosphoglycerate. The chain is 2,3-bisphosphoglycerate-dependent phosphoglycerate mutase from Chlorobaculum tepidum (strain ATCC 49652 / DSM 12025 / NBRC 103806 / TLS) (Chlorobium tepidum).